Here is a 205-residue protein sequence, read N- to C-terminus: Probable GTP-binding protein EngB (205 aa).

The EngB-type G domain occupies 27-201; the sequence is TGIEIAFAGR…AVKLDFWFSP (175 aa). GTP-binding positions include 35–42, 62–66, 80–83, 147–150, and 180–182; these read GRSNAGKS, GRTQL, DLPG, TKAD, and FSA. Positions 42 and 64 each coordinate Mg(2+).

Belongs to the TRAFAC class TrmE-Era-EngA-EngB-Septin-like GTPase superfamily. EngB GTPase family. The cofactor is Mg(2+).

In terms of biological role, necessary for normal cell division and for the maintenance of normal septation. This chain is Probable GTP-binding protein EngB, found in Haemophilus influenzae (strain PittGG).